The chain runs to 623 residues: MVSKQQTMGFQTEVKQMLHLVVHSLYSNKEIFLRELISNASDALDKLRFLALSNGSLFENDSDLKISIQINEKLQTITISDNGIGLSWEEAVENLGTIAKSGTKEFISQLTGEQAKDSQLIGQFGVGFYSAFIVADKVTVKSRRAGLQPEDGIVWESKGDGEFTIGYEKKSTRGTEITLHLKPENDEFLSDWRIRGIISKYSDHICWPIVMKKLSEEGKESKEFETVNKATALWTLQKSEISEEDYKQLYKHISHDYMDPLTWSHNHVEGKHEYITLLYIPAHAPFDLWQHEAKHGLKLYVKRVFIMDEATQFLPRYLRFVKGIVDASDLPLNISREILQDNKQVESIRAACTKRVLSMLEKMATNDKETYQKFWNEFGLVLKEGPIEDFANKEAIAKLLRFSTTASGSEKQEVSLEEYVSRMKEGQDKIYYITASSYNAAKNSPHLEIFRKKGIEVLLLSDKVDEWLVGYMNEFAGKKLQSISKGKVELGDDETSEQIKEQEKTLEPLIKHIKSVLNERVKDVLLTNRLTDSPACVVADEQDMGLEMQRILQAAGQQVPVSKPIFEINPDHALIKRLHDIQDDNQFELWVTMLFEQAVLAEGGQLDNPADFVNRVNRLLVSS.

The segment at 1–336 (MVSKQQTMGF…ASDLPLNISR (336 aa)) is a; substrate-binding. Residues 337-550 (EILQDNKQVE…EQDMGLEMQR (214 aa)) form a b region. Positions 551–623 (ILQAAGQQVP…NRVNRLLVSS (73 aa)) are c.

The protein belongs to the heat shock protein 90 family. In terms of assembly, homodimer.

The protein localises to the cytoplasm. In terms of biological role, molecular chaperone. Has ATPase activity. The sequence is that of Chaperone protein HtpG from Legionella pneumophila subsp. pneumophila (strain Philadelphia 1 / ATCC 33152 / DSM 7513).